The chain runs to 291 residues: Probable protein S-acyltransferase 12 (291 aa).

The next 2 membrane-spanning stretches (helical) occupy residues 14 to 34 (GYFM…AVVV) and 49 to 69 (LSAL…MLLW). The 51-residue stretch at 111-161 (GYCTKCRNVKPPRCHHCSVCQRCVLKMDHHCVWIVNCVGARNYKFFLLFLF) folds into the DHHC domain. Cys-141 (S-palmitoyl cysteine intermediate) is an active-site residue. Helical transmembrane passes span 155-175 (FFLL…IVLL) and 198-218 (LVLA…FVVM).

Belongs to the DHHC palmitoyltransferase family.

Its subcellular location is the cell membrane. The catalysed reaction is L-cysteinyl-[protein] + hexadecanoyl-CoA = S-hexadecanoyl-L-cysteinyl-[protein] + CoA. In terms of biological role, palmitoyl acyltransferase. The chain is Probable protein S-acyltransferase 12 (PAT12) from Arabidopsis thaliana (Mouse-ear cress).